Consider the following 383-residue polypeptide: Dual-specificity RNA methyltransferase RlmN (383 aa).

Glu-94 acts as the Proton acceptor in catalysis. Residues 100–339 (DGDRATLCVS…VTVRRTRGDD (240 aa)) form the Radical SAM core domain. Cys-107 and Cys-344 are disulfide-bonded. Residues Cys-114, Cys-118, and Cys-121 each contribute to the [4Fe-4S] cluster site. S-adenosyl-L-methionine is bound by residues 168 to 169 (GE), Ser-200, 222 to 224 (SLH), and Asn-301. Cys-344 serves as the catalytic S-methylcysteine intermediate.

The protein belongs to the radical SAM superfamily. RlmN family. It depends on [4Fe-4S] cluster as a cofactor.

Its subcellular location is the cytoplasm. It carries out the reaction adenosine(2503) in 23S rRNA + 2 reduced [2Fe-2S]-[ferredoxin] + 2 S-adenosyl-L-methionine = 2-methyladenosine(2503) in 23S rRNA + 5'-deoxyadenosine + L-methionine + 2 oxidized [2Fe-2S]-[ferredoxin] + S-adenosyl-L-homocysteine. It catalyses the reaction adenosine(37) in tRNA + 2 reduced [2Fe-2S]-[ferredoxin] + 2 S-adenosyl-L-methionine = 2-methyladenosine(37) in tRNA + 5'-deoxyadenosine + L-methionine + 2 oxidized [2Fe-2S]-[ferredoxin] + S-adenosyl-L-homocysteine. Functionally, specifically methylates position 2 of adenine 2503 in 23S rRNA and position 2 of adenine 37 in tRNAs. m2A2503 modification seems to play a crucial role in the proofreading step occurring at the peptidyl transferase center and thus would serve to optimize ribosomal fidelity. The polypeptide is Dual-specificity RNA methyltransferase RlmN (Aliivibrio salmonicida (strain LFI1238) (Vibrio salmonicida (strain LFI1238))).